The chain runs to 405 residues: L-rhamnonate dehydratase (405 aa).

Residues H33 and R59 each coordinate substrate. The Mg(2+) site is built by D226, E252, and E280. Residue H329 is the Proton acceptor of the active site. E349 is a binding site for substrate.

The protein belongs to the mandelate racemase/muconate lactonizing enzyme family. RhamD subfamily. As to quaternary structure, homooctamer; tetramer of dimers. It depends on Mg(2+) as a cofactor.

It catalyses the reaction L-rhamnonate = 2-dehydro-3-deoxy-L-rhamnonate + H2O. Functionally, catalyzes the dehydration of L-rhamnonate to 2-keto-3-deoxy-L-rhamnonate (KDR). This is L-rhamnonate dehydratase from Escherichia coli O6:H1 (strain CFT073 / ATCC 700928 / UPEC).